A 416-amino-acid chain; its full sequence is Actin-like protein 9 (416 aa).

Positions 1 to 40 (MDASRPKSSESQSSLEAPRPGPNPSPNVVNKPLQRDSPGM) are disordered.

This sequence belongs to the actin family. In terms of assembly, interacts with ACTL7A. As to expression, testis-specific.

The protein localises to the cytoplasmic vesicle. The protein resides in the secretory vesicle. It localises to the acrosome. Its subcellular location is the cytoplasm. It is found in the cytoskeleton. The protein localises to the perinuclear theca. In terms of biological role, testis-specic protein that plays an important role in fusion of proacrosomal vesicles and perinuclear theca formation. In Homo sapiens (Human), this protein is Actin-like protein 9.